A 431-amino-acid polypeptide reads, in one-letter code: Enolase (431 aa).

Q167 serves as a coordination point for (2R)-2-phosphoglycerate. E209 serves as the catalytic Proton donor. D246, E290, and D317 together coordinate Mg(2+). (2R)-2-phosphoglycerate is bound by residues K342, R371, S372, and K393. The active-site Proton acceptor is the K342.

The protein belongs to the enolase family. As to quaternary structure, component of the RNA degradosome, a multiprotein complex involved in RNA processing and mRNA degradation. Mg(2+) is required as a cofactor.

It is found in the cytoplasm. It localises to the secreted. The protein resides in the cell surface. The catalysed reaction is (2R)-2-phosphoglycerate = phosphoenolpyruvate + H2O. It participates in carbohydrate degradation; glycolysis; pyruvate from D-glyceraldehyde 3-phosphate: step 4/5. Catalyzes the reversible conversion of 2-phosphoglycerate (2-PG) into phosphoenolpyruvate (PEP). It is essential for the degradation of carbohydrates via glycolysis. The polypeptide is Enolase (Enterobacter sp. (strain 638)).